We begin with the raw amino-acid sequence, 229 residues long: Small ribosomal subunit protein uS3 (229 aa).

Residues 38 to 106 (IREYIENKLF…KVHINVMEVK (69 aa)) form the KH type-2 domain. Acidic residues predominate over residues 208–217 (PEVDENEETK). Residues 208–229 (PEVDENEETKEENKEKSEEKSE) are disordered. A compositionally biased stretch (basic and acidic residues) spans 218–229 (EENKEKSEEKSE).

Belongs to the universal ribosomal protein uS3 family. In terms of assembly, part of the 30S ribosomal subunit. Forms a tight complex with proteins S10 and S14.

Binds the lower part of the 30S subunit head. Binds mRNA in the 70S ribosome, positioning it for translation. This Natranaerobius thermophilus (strain ATCC BAA-1301 / DSM 18059 / JW/NM-WN-LF) protein is Small ribosomal subunit protein uS3.